The following is a 59-amino-acid chain: Conorfamide-Ep1 (59 aa).

The signal sequence occupies residues 1-19 (MSGCGFLLLALLLLVTVEA). A propeptide spanning residues 20–25 (TKMEKK) is cleaved from the precursor. Ile-43 carries the post-translational modification Isoleucine amide. A propeptide spanning residues 45–59 (RRDMQSPLLSERLRF) is cleaved from the precursor.

This sequence belongs to the FARP (FMRFamide related peptide) family. Expressed by the venom duct.

It localises to the secreted. In terms of biological role, neurotoxin that is active on vertebrates. When tested at high doses (10 uM), the toxin affects all zebrafish and mouse DRG neurons in culture, which could be an indication of an effect on a widely expressed receptor or ion channel found in both species. At low doses (1 uM), the effects of the toxin are confined to a specific subpopulation of zebrafish and mouse DRG neurons. In vivo, it induces long-lasting dramatic alterations in the locomotor behavior of zebrafish larvae. It rapidly induces hypoactivity and death of larvae at high doses and it causes hyperactivity at lower doses. In zebrafish adults, intramuscular injection causes the decrease of the movements and visited spaces. In mice, intracranial injection causes lethargy and prolonges sleeping phases and reduced movement. This chain is Conorfamide-Ep1, found in Conus episcopatus (Bishop's cone).